We begin with the raw amino-acid sequence, 133 residues long: Histone H2A.1 (133 aa).

Residues 1-23 form a disordered region; it reads MSTTGKGGKAKGKTASSKQVSRS. S2 carries the N-acetylserine modification. N6-acetyllysine is present on residues K6, K9, K11, K13, and K18. Phosphoserine is present on S123. K124 is covalently cross-linked (Glycyl lysine isopeptide (Lys-Gly) (interchain with G-Cter in ubiquitin)). S129 is modified (phosphoserine).

The protein belongs to the histone H2A family. As to quaternary structure, the nucleosome is a histone octamer containing two molecules each of H2A, H2B, H3 and H4 assembled in one H3-H4 heterotetramer and two H2A-H2B heterodimers. The octamer wraps approximately 147 bp of DNA. In terms of processing, monoubiquitination of Lys-124 gives a specific tag for epigenetic transcriptional repression. Post-translationally, acetylation occurs almost exclusively in the MAC.

Its subcellular location is the nucleus. It is found in the chromosome. In terms of biological role, core component of nucleosome. Nucleosomes wrap and compact DNA into chromatin, limiting DNA accessibility to the cellular machineries which require DNA as a template. Histones thereby play a central role in transcription regulation, DNA repair, DNA replication and chromosomal stability. DNA accessibility is regulated via a complex set of post-translational modifications of histones, also called histone code, and nucleosome remodeling. The chain is Histone H2A.1 (HTA2) from Tetrahymena pyriformis.